A 102-amino-acid chain; its full sequence is Alpha-ketoglutarate dehydrogenase component 4 (102 aa).

Gly2 is subject to N-acetylglycine. Lys4 carries the post-translational modification N6-succinyllysine. A disordered region spans residues 23 to 70 (KFPNRRDKPKLSASEALGSAALPSHSSAISQHSKGSTSPDLLMHQGPP). The span at 33–46 (LSASEALGSAALPS) shows a compositional bias: low complexity. A compositionally biased stretch (polar residues) spans 47 to 61 (HSSAISQHSKGSTSP). Phosphoserine is present on residues Ser48, Ser60, and Ser89.

The protein belongs to the alpha-ketoglutarate dehydrogenase component 4 family. As to quaternary structure, component of the 2-oxoglutarate dehydrogenase complex (OGDHC), composed of OGDH (2-oxoglutarate dehydrogenase; also called E1 subunit), DLST (dihydrolipoamide succinyltransferase; also called E2 subunit) and DLD (dihydrolipoamide dehydrogenase; also called E3 subunit), and the assembly factor KGD4. Within OGDHC complex, interacts (via N-terminus) with E3 subunit and (via C-terminus) with E2 subunit.

Its subcellular location is the mitochondrion. Molecular adapter that is necessary to form a stable 2-oxoglutarate dehydrogenase enzyme complex (OGDHC). Enables the specific recruitment of E3 subunit to E2 subunit in the 2-oxoglutarate dehydrogenase complex (OGDHC). This Mus musculus (Mouse) protein is Alpha-ketoglutarate dehydrogenase component 4.